A 1942-amino-acid chain; its full sequence is Myosin-1 (1942 aa).

The Myosin N-terminal SH3-like domain occupies 33 to 82; it reads DAKSSVFVVDAKESFVKATVQSREGGKVTAKTEGGTTVTVKDDQVYPMNP. A Phosphoserine modification is found at Ser-36. Phosphothreonine occurs at positions 64 and 69. One can recognise a Myosin motor domain in the interval 86-785; it reads DKIEDMAMMT…LLGLLEEMRD (700 aa). At Lys-130 the chain carries N6,N6,N6-trimethyllysine. Residue 179–186 participates in ATP binding; that stretch reads GESGAGKT. Tyr-389 carries the post-translational modification Phosphotyrosine. At Thr-419 the chain carries Phosphothreonine. Tyr-424 is modified (phosphotyrosine). Phosphoserine is present on Ser-625. Residues 662–684 are actin-binding; the sequence is LNKLMTNLRSTHPHFVRCIIPNE. Pros-methylhistidine is present on His-760. Residues 764-778 are actin-binding; sequence KFGHTKVFFKAGLLG. In terms of domain architecture, IQ spans 788–817; it reads LAQLITRTQAMCRGYLARVEYQKMVERRES. Residues 846–1942 adopt a coiled-coil conformation; sequence LLKSAETEKE…EVHTKIISEE (1097 aa). Phosphoserine occurs at positions 1095, 1099, 1165, 1240, and 1246. The disordered stretch occupies residues 1156 to 1175; that stretch reads RLEEAGGATSAQIEMNKKRE. Thr-1258 is modified (phosphothreonine). Ser-1264 is subject to Phosphoserine. Thr-1268 and Thr-1289 each carry phosphothreonine. A phosphoserine mark is found at Ser-1291, Ser-1295, Ser-1306, and Ser-1309. Residue Tyr-1467 is modified to Phosphotyrosine. Thr-1470 is modified (phosphothreonine). Ser-1477 carries the phosphoserine modification. Residue Tyr-1495 is modified to Phosphotyrosine. At Ser-1498 the chain carries Phosphoserine. A Phosphothreonine modification is found at Thr-1504. The residue at position 1517 (Ser-1517) is a Phosphoserine. Phosphothreonine is present on Thr-1520. Phosphoserine is present on residues Ser-1545, Ser-1557, Ser-1577, Ser-1603, Ser-1606, Ser-1717, and Ser-1729. Thr-1733 and Thr-1739 each carry phosphothreonine. Position 1742 is a phosphoserine (Ser-1742).

Belongs to the TRAFAC class myosin-kinesin ATPase superfamily. Myosin family. As to quaternary structure, muscle myosin is a hexameric protein that consists of 2 heavy chain subunits (MHC), 2 alkali light chain subunits (MLC) and 2 regulatory light chain subunits (MLC-2). Interacts with SLC26A5. Expressed in the cochlea (at protein level). Strongly expressed in spiral ganglion neurons with axonal sprouts and supporting cells around hair cells. In the organ of Corti, it is expressed in inner and outer hair cells, and in supporting cells.

The protein localises to the cytoplasm. It localises to the myofibril. Required for normal hearing. It plays a role in cochlear amplification of auditory stimuli, likely through the positive regulation of prestin (SLC26A5) activity and outer hair cell (OHC) electromotility. The chain is Myosin-1 from Mus musculus (Mouse).